Reading from the N-terminus, the 279-residue chain is YTPNDPYFSSRQYGPQKIQAPQAWDIAEGSGAKIAIVDTGVQSNHPDLAGKVVGGWDFVDNDSTPQNGNGHGTHCAGIAAAVTNNSTGIAGTAPKASILAVRVLDNSGSGTWTAVANGITYAADQGAKVISLSLGGTVGNSGLQQAVNYAWNKGSVVVAAAGNAGNTAPNYPAYYSNAIAVASTDQNDNKSSFSTYGSVVDVAAPGSWIYSTYPTSTYASLSGTSMATPHVAGVAGLLASQGRSASNIRAAIENTADKISGTGTYWAKGRVNAYKAVQY.

Residue Asp-5 coordinates Ca(2+). The 266-residue stretch at 12–277 (QYGPQKIQAP…KGRVNAYKAV (266 aa)) folds into the Peptidase S8 domain. Asp-38 serves as the catalytic Charge relay system. Residues Asp-47, Asp-57, Asp-60, Asp-62, Thr-64, and Gln-66 each contribute to the Ca(2+) site. The Charge relay system role is filled by His-71. Positions 82, 85, 87, and 89 each coordinate Ca(2+). Na(+) is bound by residues Ala-173, Tyr-175, and Ala-178. 2 residues coordinate Ca(2+): Val-199 and Asp-201. Asp-201 lines the Na(+) pocket. Ser-225 serves as the catalytic Charge relay system.

Belongs to the peptidase S8 family. Ca(2+) serves as cofactor. It depends on Na(+) as a cofactor.

It is found in the secreted. The enzyme catalyses Hydrolysis of proteins, including collagen.. In Thermoactinomyces vulgaris, this protein is Thermitase.